A 318-amino-acid polypeptide reads, in one-letter code: tRNA U34 carboxymethyltransferase (318 aa).

Positions 88, 102, 107, 126, 192, 196, and 311 each coordinate carboxy-S-adenosyl-L-methionine.

The protein belongs to the class I-like SAM-binding methyltransferase superfamily. CmoB family. In terms of assembly, homotetramer.

The catalysed reaction is carboxy-S-adenosyl-L-methionine + 5-hydroxyuridine(34) in tRNA = 5-carboxymethoxyuridine(34) in tRNA + S-adenosyl-L-homocysteine + H(+). In terms of biological role, catalyzes carboxymethyl transfer from carboxy-S-adenosyl-L-methionine (Cx-SAM) to 5-hydroxyuridine (ho5U) to form 5-carboxymethoxyuridine (cmo5U) at position 34 in tRNAs. In Pseudomonas fluorescens (strain SBW25), this protein is tRNA U34 carboxymethyltransferase.